The chain runs to 328 residues: 5,10-methylenetetrahydromethanopterin reductase (328 aa).

It belongs to the mer family.

The protein localises to the cytoplasm. It carries out the reaction 5-methyl-5,6,7,8-tetrahydromethanopterin + oxidized coenzyme F420-(gamma-L-Glu)(n) + H(+) = 5,10-methylenetetrahydromethanopterin + reduced coenzyme F420-(gamma-L-Glu)(n). It functions in the pathway one-carbon metabolism; methanogenesis from CO(2); methyl-coenzyme M from 5,10-methylene-5,6,7,8-tetrahydromethanopterin: step 1/2. In terms of biological role, catalyzes the reversible reduction of methylene-H(4)MPT to methyl-H(4)MPT. This chain is 5,10-methylenetetrahydromethanopterin reductase, found in Methanosarcina mazei (strain ATCC BAA-159 / DSM 3647 / Goe1 / Go1 / JCM 11833 / OCM 88) (Methanosarcina frisia).